We begin with the raw amino-acid sequence, 32 residues long: U3-theraphotoxin-Hhn1r (32 aa).

Disulfide bonds link Cys-2–Cys-15, Cys-9–Cys-20, and Cys-14–Cys-27.

This sequence belongs to the neurotoxin 10 (Hwtx-1) family. 16 (Hntx-8) subfamily. As to expression, expressed by the venom gland.

The protein resides in the secreted. Its function is as follows. Ion channel inhibitor. In Cyriopagopus hainanus (Chinese bird spider), this protein is U3-theraphotoxin-Hhn1r.